Here is a 131-residue protein sequence, read N- to C-terminus: MAFITDPIADMLTRIRNATIRKHKNVSFQHSKTKVKILEIIQKAGYIKDFQVEGDLKKNITVELKYKGNLSSISGLKRISKPSLRVYTSASKIPFVQSGFGIAILSTSKGLLTDSQARKENVGGEIIAYIW.

The protein belongs to the universal ribosomal protein uS8 family. As to quaternary structure, part of the 30S ribosomal subunit. Contacts proteins S5 and S12.

Its function is as follows. One of the primary rRNA binding proteins, it binds directly to 16S rRNA central domain where it helps coordinate assembly of the platform of the 30S subunit. The sequence is that of Small ribosomal subunit protein uS8 from Mesomycoplasma hyopneumoniae (strain 7448) (Mycoplasma hyopneumoniae).